A 153-amino-acid chain; its full sequence is MAPGSRGERSSFRSRRGPGVPSPQPDVTMLSRLLKEHQAKQNERKELQEKRRREAITAATCLTEALVDHLNVGVAQAYMNQRKLDHEVKTLQVQAAQFAKQTGQWIGMVENFNQALKEIGDVENWARSIELDMRTIATALEYVYKGQLQSAPS.

Residues 1 to 11 are compositionally biased toward basic and acidic residues; it reads MAPGSRGERSS. A disordered region spans residues 1–27; that stretch reads MAPGSRGERSSFRSRRGPGVPSPQPDV. The stretch at 27–59 forms a coiled coil; sequence VTMLSRLLKEHQAKQNERKELQEKRRREAITAA.

It belongs to the BLOC1S1 family. In terms of assembly, component of the biogenesis of lysosome-related organelles complex 1 (BLOC-1) composed of BLOC1S1, BLOC1S2, BLOC1S3, BLOC1S4, BLOC1S5, BLOC1S6, DTNBP1/BLOC1S7 and SNAPIN/BLOC1S8. Octamer composed of one copy each BLOC1S1, BLOC1S2, BLOC1S3, BLOC1S4, BLOC1S5, BLOC1S6, DTNBP1/BLOC1S7 and SNAPIN/BLOC1S8. The BLOC-1 complex associates with the AP-3 protein complex and membrane protein cargos. Component of the BLOC-one-related complex (BORC) which is composed of BLOC1S1, BLOC1S2, BORCS5, BORCS6, BORCS7, BORCS8, KXD1 and SNAPIN. Interacts with ATP5F1A and NDUFA9; involved in their acetylation on lysine residues. Interacts with KXD1.

The protein localises to the mitochondrion intermembrane space. It localises to the mitochondrion matrix. Its subcellular location is the cytoplasm. The protein resides in the cytosol. It is found in the lysosome membrane. The catalysed reaction is L-lysyl-[protein] + acetyl-CoA = N(6)-acetyl-L-lysyl-[protein] + CoA + H(+). In terms of biological role, component of the BLOC-1 complex, a complex that is required for normal biogenesis of lysosome-related organelles (LRO), such as platelet dense granules and melanosomes. In concert with the AP-3 complex, the BLOC-1 complex is required to target membrane protein cargos into vesicles assembled at cell bodies for delivery into neurites and nerve terminals. The BLOC-1 complex, in association with SNARE proteins, is also proposed to be involved in neurite extension. As part of the BORC complex may play a role in lysosomes movement and localization at the cell periphery. Associated with the cytosolic face of lysosomes, the BORC complex may recruit ARL8B and couple lysosomes to microtubule plus-end-directed kinesin motor. Its function is as follows. Acts as a protein acetyltransferase. Negatively regulates aerobic respiration through mitochondrial protein lysine-acetylation. May counteract the action of the deacetylase SIRT3 by acetylating and regulating proteins of the mitochondrial respiratory chain including ATP5F1A and NDUFA9. Acts as a regulator of mTORC2 signaling in response to hypotoxic stress by mediating acetylation of RICTOR, thereby protecting RICTOR against ubiquitination and subsequent degradation by the proteasome. In Homo sapiens (Human), this protein is Biogenesis of lysosome-related organelles complex 1 subunit 1 (BLOC1S1).